Consider the following 539-residue polypeptide: Fucosyltransferase 2 (539 aa).

Residues M1 to E5 lie on the Cytoplasmic side of the membrane. The chain crosses the membrane as a helical; Signal-anchor for type II membrane protein span at residues I6–Y26. Over D27–F539 the chain is Lumenal. N-linked (GlcNAc...) asparagine glycosylation is found at N44, N231, and N482.

This sequence belongs to the glycosyltransferase 37 family. As to expression, expressed in roots, stems, leaves, flowers, siliques and seedlings.

It localises to the golgi apparatus. The protein resides in the golgi stack membrane. The protein operates within protein modification; protein glycosylation. Its function is as follows. May be involved in cell wall biosynthesis. May act as a fucosyltransferase. The sequence is that of Fucosyltransferase 2 (FUT2) from Arabidopsis thaliana (Mouse-ear cress).